The chain runs to 200 residues: MASVAGPEIDRLIQLLARLPGLGPRSARRAALHLIKKREALMTPLASALQVAIDRIQICEICGNIDTRSPCTVCTDMRRDPSIIVVVADVADLWALERAGATNGFYHVLGATLSPLDGVGPQDLTIDALVSRAHDPRVTEIVLALNATVDGQTTAHYITDLLGEANVKVTRLAHGVPVGGELDYLDEGTLSAAMRQRTPF.

Residues 59–74 form a C4-type zinc finger; the sequence is CEICGNIDTRSPCTVC. A Toprim domain is found at 82–177; sequence SIIVVVADVA…KVTRLAHGVP (96 aa).

The protein belongs to the RecR family.

Its function is as follows. May play a role in DNA repair. It seems to be involved in an RecBC-independent recombinational process of DNA repair. It may act with RecF and RecO. The polypeptide is Recombination protein RecR (Nitrobacter hamburgensis (strain DSM 10229 / NCIMB 13809 / X14)).